Reading from the N-terminus, the 692-residue chain is Elongation factor G (692 aa).

The tr-type G domain maps to 8-282 (PNTRNIGIMA…NVVAYLPSPV (275 aa)). Residues 17–24 (AHIDAGKT), 81–85 (DTPGH), and 135–138 (NKMD) contribute to the GTP site.

This sequence belongs to the TRAFAC class translation factor GTPase superfamily. Classic translation factor GTPase family. EF-G/EF-2 subfamily.

It is found in the cytoplasm. Catalyzes the GTP-dependent ribosomal translocation step during translation elongation. During this step, the ribosome changes from the pre-translocational (PRE) to the post-translocational (POST) state as the newly formed A-site-bound peptidyl-tRNA and P-site-bound deacylated tRNA move to the P and E sites, respectively. Catalyzes the coordinated movement of the two tRNA molecules, the mRNA and conformational changes in the ribosome. This chain is Elongation factor G, found in Brevibacillus brevis (strain 47 / JCM 6285 / NBRC 100599).